The chain runs to 297 residues: Adrenocorticotropic hormone receptor (297 aa).

Residues 1–23 (MKHITDLYESVNSTMSNKSDCPP) lie on the Extracellular side of the membrane. N-linked (GlcNAc...) asparagine glycosylation is found at Asn-12 and Asn-17. 2 cysteine pairs are disulfide-bonded: Cys-21–Cys-253 and Cys-245–Cys-251. Residues 24-49 (VVLPEEVFFTISVIGVLENLIVLLAV) traverse the membrane as a helical segment. The Cytoplasmic segment spans residues 50-58 (IKNKNLQSP). Residues 59–79 (MYFFICSLAISDMLGSLYKIL) form a helical membrane-spanning segment. The Extracellular segment spans residues 80-104 (ENILIIFRNMGYLEPRGGFESTADD). The chain crosses the membrane as a helical span at residues 105–126 (VVDSLFILSLLGSICSLSAIAA). Over 127 to 147 (DRYITIFHALQYQRLVTPRRA) the chain is Cytoplasmic. Residues 148-168 (AVVLLIIWACCIGSGITIVTF) traverse the membrane as a helical segment. Residues 169–180 (SHHVPAVIAFTA) are Extracellular-facing. Residues 181–199 (LFPLMLVFILCLYGHMFLL) form a helical membrane-spanning segment. Residues 200–217 (ARSHARRVSTLPRANMKG) are Cytoplasmic-facing. A helical membrane pass occupies residues 218-244 (AITLTVLLGVFIFCWAPFVLHILLMTF). Topologically, residues 245–256 (CPADPYCACYLA) are extracellular. Residues 257–278 (LFQVNAVLIMCNAIIDPFIYAF) form a helical membrane-spanning segment. Residues 279–297 (RSPELRDAFKKMIICKRYP) are Cytoplasmic-facing. Cys-293 is lipidated: S-palmitoyl cysteine.

The protein belongs to the G-protein coupled receptor 1 family. As to quaternary structure, homodimer. Interacts with corticotropin (ACTH). Interacts with MRAP; this interaction targets MC2R to the plasma membrane. Interacts with MRAP2; competing with MRAP for binding to MC2R and impairing the binding of corticotropin (ACTH). Ubiquitinated by MGRN1 that may be involved in post-endocytic trafficking and/or degradation of internalized receptor. Expressed in skin and adrenal gland tissues.

The protein localises to the cell membrane. Functionally, hormone receptor primarily expressed in adrenal cortex that plays a key role in regulating adrenocortical function. Upon corticotropin (ACTH) binding, facilitates the release of adrenal glucocorticoids, including cortisol and corticosterone. In addition, MC2R is required for fetal and neonatal adrenal gland development. Mechanistically, activates adenylate cyclase (cAMP), the MAPK cascade as well as the cAMP-dependent protein kinase A pathway leading to steroidogenic factor 1/NR5A1-mediated transcriptional activation. The sequence is that of Adrenocorticotropic hormone receptor (MC2R) from Sus scrofa (Pig).